Consider the following 459-residue polypeptide: Glutamyl-tRNA reductase (459 aa).

Substrate-binding positions include 47 to 50 (TCNR), Ser140, 145 to 147 (EPQ), and Gln151. Cys48 acts as the Nucleophile in catalysis. 220–225 (AAGEMN) is a binding site for NADP(+).

Belongs to the glutamyl-tRNA reductase family. In terms of assembly, homodimer.

It catalyses the reaction (S)-4-amino-5-oxopentanoate + tRNA(Glu) + NADP(+) = L-glutamyl-tRNA(Glu) + NADPH + H(+). It functions in the pathway porphyrin-containing compound metabolism; protoporphyrin-IX biosynthesis; 5-aminolevulinate from L-glutamyl-tRNA(Glu): step 1/2. In terms of biological role, catalyzes the NADPH-dependent reduction of glutamyl-tRNA(Glu) to glutamate 1-semialdehyde (GSA). This chain is Glutamyl-tRNA reductase, found in Psychrobacter arcticus (strain DSM 17307 / VKM B-2377 / 273-4).